The primary structure comprises 162 residues: Sec-independent protein translocase protein TatB (162 aa).

A helical membrane pass occupies residues 1-21; sequence MFDLGWTELLVIGVVALIVVG. Disordered stretches follow at residues 69-111 and 124-162; these read ATNP…DRAE and AADRMAREAAEAAAKAEEAEAALSATPASTASSDSETKA. Basic and acidic residues-rich tracts occupy residues 83–111 and 124–141; these read ATRDLTDSIDPTKFDPESETGKLAADRAE and AADRMAREAAEAAAKAEE. Residues 144 to 155 are compositionally biased toward low complexity; the sequence is AALSATPASTAS.

Belongs to the TatB family. In terms of assembly, the Tat system comprises two distinct complexes: a TatABC complex, containing multiple copies of TatA, TatB and TatC subunits, and a separate TatA complex, containing only TatA subunits. Substrates initially bind to the TatABC complex, which probably triggers association of the separate TatA complex to form the active translocon.

The protein localises to the cell inner membrane. Functionally, part of the twin-arginine translocation (Tat) system that transports large folded proteins containing a characteristic twin-arginine motif in their signal peptide across membranes. Together with TatC, TatB is part of a receptor directly interacting with Tat signal peptides. TatB may form an oligomeric binding site that transiently accommodates folded Tat precursor proteins before their translocation. This chain is Sec-independent protein translocase protein TatB, found in Ruegeria sp. (strain TM1040) (Silicibacter sp.).